The sequence spans 249 residues: ATP synthase subunit a (249 aa).

6 consecutive transmembrane segments (helical) span residues 30–50, 86–106, 115–135, 146–166, 191–211, and 218–238; these read QSPL…YVGM, FFPF…LGLL, HIAV…LASI, FLPA…EIIS, VFAG…VLAI, and IALT…FAIL.

Belongs to the ATPase A chain family. F-type ATPases have 2 components, CF(1) - the catalytic core - and CF(0) - the membrane proton channel. CF(1) has five subunits: alpha(3), beta(3), gamma(1), delta(1), epsilon(1). CF(0) has three main subunits: a(1), b(2) and c(9-12). The alpha and beta chains form an alternating ring which encloses part of the gamma chain. CF(1) is attached to CF(0) by a central stalk formed by the gamma and epsilon chains, while a peripheral stalk is formed by the delta and b chains.

It is found in the cell inner membrane. In terms of biological role, key component of the proton channel; it plays a direct role in the translocation of protons across the membrane. This Gluconobacter oxydans (strain 621H) (Gluconobacter suboxydans) protein is ATP synthase subunit a.